We begin with the raw amino-acid sequence, 349 residues long: Divinyl chlorophyll a/b light-harvesting protein PcbE (349 aa).

The next 6 membrane-spanning stretches (helical) occupy residues phenylalanine 27–leucine 47, isoleucine 65–glycine 85, valine 88–leucine 108, valine 201–alanine 221, alanine 241–cysteine 261, and leucine 308–leucine 328.

This sequence belongs to the PsbB/PsbC family. IsiA/Pcb subfamily. As to quaternary structure, the antenna complex consists of divinyl chlorophylls (a and b) and divinyl chlorophyll a/b binding proteins and binds more divinyl chlorophyll b than does the antenna complex from high-light-adapted Prochlorococcus. The cofactor is divinyl chlorophyll a. Divinyl chlorophyll b is required as a cofactor.

It localises to the cellular thylakoid membrane. Functionally, the antenna complex functions as a light receptor, it captures and delivers excitation energy to photosystems II and I. The Prochlorales pcb genes are not related to higher plant LHCs. This is Divinyl chlorophyll a/b light-harvesting protein PcbE (pcbE) from Prochlorococcus marinus (strain NATL2A).